The sequence spans 584 residues: UvrABC system protein C (584 aa).

In terms of domain architecture, GIY-YIG spans 12 to 89; that stretch reads NKPGCYLFLN…IKKYRPKYNV (78 aa). The UVR domain maps to 194–229; the sequence is NQVKQTLVKQMQKASDNLQFEQAKRIKDQITSLDFI.

Belongs to the UvrC family. As to quaternary structure, interacts with UvrB in an incision complex.

It localises to the cytoplasm. Functionally, the UvrABC repair system catalyzes the recognition and processing of DNA lesions. UvrC both incises the 5' and 3' sides of the lesion. The N-terminal half is responsible for the 3' incision and the C-terminal half is responsible for the 5' incision. The chain is UvrABC system protein C from Mycoplasma capricolum subsp. capricolum (strain California kid / ATCC 27343 / NCTC 10154).